Reading from the N-terminus, the 515-residue chain is 2-isopropylmalate synthase (515 aa).

The Pyruvate carboxyltransferase domain maps to 5–268 (LIIFDTTLRD…DLGIDTTQIV (264 aa)). 4 residues coordinate Mn(2+): Asp14, His202, His204, and Asn239. Positions 396-515 (KFVSLAQRSE…NADKLNPQRA (120 aa)) are regulatory domain.

The protein belongs to the alpha-IPM synthase/homocitrate synthase family. LeuA type 1 subfamily. In terms of assembly, homodimer. It depends on Mn(2+) as a cofactor.

It is found in the cytoplasm. The enzyme catalyses 3-methyl-2-oxobutanoate + acetyl-CoA + H2O = (2S)-2-isopropylmalate + CoA + H(+). The protein operates within amino-acid biosynthesis; L-leucine biosynthesis; L-leucine from 3-methyl-2-oxobutanoate: step 1/4. In terms of biological role, catalyzes the condensation of the acetyl group of acetyl-CoA with 3-methyl-2-oxobutanoate (2-ketoisovalerate) to form 3-carboxy-3-hydroxy-4-methylpentanoate (2-isopropylmalate). In Burkholderia pseudomallei (strain 1106a), this protein is 2-isopropylmalate synthase.